We begin with the raw amino-acid sequence, 303 residues long: Coenzyme PQQ synthesis protein B (303 aa).

The protein belongs to the PqqB family.

It participates in cofactor biosynthesis; pyrroloquinoline quinone biosynthesis. Functionally, may be involved in the transport of PQQ or its precursor to the periplasm. The chain is Coenzyme PQQ synthesis protein B from Pseudomonas fluorescens (strain Pf0-1).